We begin with the raw amino-acid sequence, 339 residues long: Bifunctional protein GlmU (339 aa).

Positions 1 to 234 are pyrophosphorylase; that stretch reads MKKENPLAIV…PKDVLGVNSR (234 aa). UDP-N-acetyl-alpha-D-glucosamine contacts are provided by residues 12 to 15, Lys26, Gln77, and 82 to 83; these read LAAG and GT. Residue Asp107 participates in Mg(2+) binding. UDP-N-acetyl-alpha-D-glucosamine-binding residues include Gly144, Glu159, Asn174, and Asn232. Asn232 contributes to the Mg(2+) binding site. Residues 235-255 are linker; that stretch reads IELAMADEELRMRRNREVMLT. The segment at 256–339 is N-acetyltransferase; it reads GVSMILPATI…KIPAQQREEE (84 aa).

This sequence belongs to the N-acetylglucosamine-1-phosphate uridyltransferase family. In terms of assembly, homotrimer. It depends on Mg(2+) as a cofactor.

The protein localises to the cytoplasm. It catalyses the reaction alpha-D-glucosamine 1-phosphate + acetyl-CoA = N-acetyl-alpha-D-glucosamine 1-phosphate + CoA + H(+). The catalysed reaction is N-acetyl-alpha-D-glucosamine 1-phosphate + UTP + H(+) = UDP-N-acetyl-alpha-D-glucosamine + diphosphate. It participates in nucleotide-sugar biosynthesis; UDP-N-acetyl-alpha-D-glucosamine biosynthesis; N-acetyl-alpha-D-glucosamine 1-phosphate from alpha-D-glucosamine 6-phosphate (route II): step 2/2. The protein operates within nucleotide-sugar biosynthesis; UDP-N-acetyl-alpha-D-glucosamine biosynthesis; UDP-N-acetyl-alpha-D-glucosamine from N-acetyl-alpha-D-glucosamine 1-phosphate: step 1/1. It functions in the pathway bacterial outer membrane biogenesis; LPS lipid A biosynthesis. Catalyzes the last two sequential reactions in the de novo biosynthetic pathway for UDP-N-acetylglucosamine (UDP-GlcNAc). The C-terminal domain catalyzes the transfer of acetyl group from acetyl coenzyme A to glucosamine-1-phosphate (GlcN-1-P) to produce N-acetylglucosamine-1-phosphate (GlcNAc-1-P), which is converted into UDP-GlcNAc by the transfer of uridine 5-monophosphate (from uridine 5-triphosphate), a reaction catalyzed by the N-terminal domain. This is Bifunctional protein GlmU (glmU) from Desulfotalea psychrophila (strain LSv54 / DSM 12343).